A 239-amino-acid polypeptide reads, in one-letter code: MMASAPQDRPAGTPPQGRGLLIVVTGASGVGKGTLRERWLAGQDVFYSTSWTTREPRPGEVNGRDYVFVSPAEFLAKAQQNGFLEHAQFVGNHYGTPIEPIEAALERGQDVVLEIEVEGAMQVKDRMGEQAILVFIMPPSLTELRRRLTGRATETPERIEKRLTRARDEIQAAHDFRYVIVNDNLDRAVSELLAVQQAERAAQKAAEHWTPEEQQARALADTVRSTALSREALQQVVES.

In terms of domain architecture, Guanylate kinase-like spans 19–197; that stretch reads GLLIVVTGAS…AVSELLAVQQ (179 aa). 26–33 serves as a coordination point for ATP; sequence GASGVGKG.

Belongs to the guanylate kinase family.

The protein localises to the cytoplasm. It catalyses the reaction GMP + ATP = GDP + ADP. Its function is as follows. Essential for recycling GMP and indirectly, cGMP. The sequence is that of Guanylate kinase (gmk) from Deinococcus radiodurans (strain ATCC 13939 / DSM 20539 / JCM 16871 / CCUG 27074 / LMG 4051 / NBRC 15346 / NCIMB 9279 / VKM B-1422 / R1).